A 360-amino-acid chain; its full sequence is Phospho-N-acetylmuramoyl-pentapeptide-transferase (360 aa).

10 helical membrane passes run 26 to 46 (AILG…KLIE), 74 to 94 (MGGL…GDLG), 97 to 117 (YVWV…IDDY), 134 to 154 (YILQ…TAAN), 168 to 188 (VMPQ…VGAS), 199 to 219 (GLAI…AYLS), 236 to 256 (SGEL…FLWF), 263 to 283 (VFMG…IAVL), 288 to 308 (ILLV…ILQV), and 338 to 358 (VIVR…ATLK).

This sequence belongs to the glycosyltransferase 4 family. MraY subfamily. Mg(2+) serves as cofactor.

Its subcellular location is the cell inner membrane. It catalyses the reaction UDP-N-acetyl-alpha-D-muramoyl-L-alanyl-gamma-D-glutamyl-meso-2,6-diaminopimeloyl-D-alanyl-D-alanine + di-trans,octa-cis-undecaprenyl phosphate = di-trans,octa-cis-undecaprenyl diphospho-N-acetyl-alpha-D-muramoyl-L-alanyl-D-glutamyl-meso-2,6-diaminopimeloyl-D-alanyl-D-alanine + UMP. Its pathway is cell wall biogenesis; peptidoglycan biosynthesis. Functionally, catalyzes the initial step of the lipid cycle reactions in the biosynthesis of the cell wall peptidoglycan: transfers peptidoglycan precursor phospho-MurNAc-pentapeptide from UDP-MurNAc-pentapeptide onto the lipid carrier undecaprenyl phosphate, yielding undecaprenyl-pyrophosphoryl-MurNAc-pentapeptide, known as lipid I. In Shewanella baltica (strain OS185), this protein is Phospho-N-acetylmuramoyl-pentapeptide-transferase.